The sequence spans 257 residues: Ribosome-recycling factor, mitochondrial (257 aa).

This sequence belongs to the RRF family.

Its subcellular location is the mitochondrion. Necessary for protein synthesis in mitochondria. Functions as a ribosome recycling factor in mitochondria. This is Ribosome-recycling factor, mitochondrial (RRF1) from Debaryomyces hansenii (strain ATCC 36239 / CBS 767 / BCRC 21394 / JCM 1990 / NBRC 0083 / IGC 2968) (Yeast).